Here is a 66-residue protein sequence, read N- to C-terminus: Moricin-2 (66 aa).

The signal sequence occupies residues 1-24 (MNILKLFFVFIVAMSLVSCSTAAP).

In terms of tissue distribution, expressed in fat body and to a lesser extent in hemocyte and Malpighian tubules.

The protein localises to the secreted. Its function is as follows. Has antibacterial activity against Gram-positive and Gram-negative bacteria. Probably acts by disturbing membrane functions with its amphipathic structure. The chain is Moricin-2 (MOR2) from Bombyx mori (Silk moth).